The following is a 236-amino-acid chain: tRNA (guanine-N(7)-)-methyltransferase (236 aa).

4 residues coordinate S-adenosyl-L-methionine: E68, E93, D120, and D143. Residue D143 is part of the active site. Residues K147, D179, and 212 to 215 (TKFE) each bind substrate.

This sequence belongs to the class I-like SAM-binding methyltransferase superfamily. TrmB family.

The enzyme catalyses guanosine(46) in tRNA + S-adenosyl-L-methionine = N(7)-methylguanosine(46) in tRNA + S-adenosyl-L-homocysteine. It participates in tRNA modification; N(7)-methylguanine-tRNA biosynthesis. Functionally, catalyzes the formation of N(7)-methylguanine at position 46 (m7G46) in tRNA. The protein is tRNA (guanine-N(7)-)-methyltransferase of Nitrosococcus oceani (strain ATCC 19707 / BCRC 17464 / JCM 30415 / NCIMB 11848 / C-107).